Reading from the N-terminus, the 379-residue chain is Putative FBD-associated F-box protein At5g38570 (379 aa).

Residues 1–47 form the F-box domain; sequence MDNINGLPDDLLVKILSFVPTYVAVSTCVLSKRWEFLWMWLPNLEFV. The region spanning 295-345 is the FBD domain; that stretch reads CWNQPSSVLECLLSSLKILNWSAYFGRPQDRDIAVYILKNACHLKTATFLT.

The polypeptide is Putative FBD-associated F-box protein At5g38570 (Arabidopsis thaliana (Mouse-ear cress)).